The following is a 147-amino-acid chain: Nucleoside diphosphate kinase (147 aa).

Lysine 9, arginine 85, threonine 91, arginine 102, and asparagine 112 together coordinate ATP. Histidine 115 acts as the Pros-phosphohistidine intermediate in catalysis.

This sequence belongs to the NDK family. Mg(2+) serves as cofactor.

The catalysed reaction is a 2'-deoxyribonucleoside 5'-diphosphate + ATP = a 2'-deoxyribonucleoside 5'-triphosphate + ADP. The enzyme catalyses a ribonucleoside 5'-diphosphate + ATP = a ribonucleoside 5'-triphosphate + ADP. Functionally, major role in the synthesis of nucleoside triphosphates other than ATP. The ATP gamma phosphate is transferred to the NDP beta phosphate via a ping-pong mechanism, using a phosphorylated active-site intermediate. The protein is Nucleoside diphosphate kinase (NDK1) of Encephalitozoon cuniculi (strain GB-M1) (Microsporidian parasite).